A 231-amino-acid chain; its full sequence is DNA mismatch repair protein MutH (231 aa).

Belongs to the MutH family.

The protein localises to the cytoplasm. In terms of biological role, sequence-specific endonuclease that cleaves unmethylated GATC sequences. It is involved in DNA mismatch repair. This is DNA mismatch repair protein MutH from Salmonella typhi.